The chain runs to 358 residues: tRNA pseudouridine synthase D (358 aa).

D84 acts as the Nucleophile in catalysis. The region spanning 161-312 (GTPNYFGPQR…RRSLRLMVAD (152 aa)) is the TRUD domain.

This sequence belongs to the pseudouridine synthase TruD family.

It carries out the reaction uridine(13) in tRNA = pseudouridine(13) in tRNA. Functionally, responsible for synthesis of pseudouridine from uracil-13 in transfer RNAs. This is tRNA pseudouridine synthase D from Nitrosococcus oceani (strain ATCC 19707 / BCRC 17464 / JCM 30415 / NCIMB 11848 / C-107).